Reading from the N-terminus, the 323-residue chain is NADH-ubiquinone oxidoreductase chain 1 (323 aa).

The next 8 membrane-spanning stretches (helical) occupy residues 4–24 (LFTV…VAFL), 73–93 (YLFF…WNLM), 106–126 (LLLV…SGWA), 150–170 (LALI…TYIM), 175–195 (FSWF…STLA), 226–246 (LFFI…VVIF), 256–276 (LFPL…FLFL), and 303–323 (IGAL…LPLF).

This sequence belongs to the complex I subunit 1 family.

It localises to the mitochondrion inner membrane. It catalyses the reaction a ubiquinone + NADH + 5 H(+)(in) = a ubiquinol + NAD(+) + 4 H(+)(out). Its function is as follows. Core subunit of the mitochondrial membrane respiratory chain NADH dehydrogenase (Complex I) that is believed to belong to the minimal assembly required for catalysis. Complex I functions in the transfer of electrons from NADH to the respiratory chain. The immediate electron acceptor for the enzyme is believed to be ubiquinone. In Paracentrotus lividus (Common sea urchin), this protein is NADH-ubiquinone oxidoreductase chain 1 (ND1).